The chain runs to 157 residues: MRIGHGYDVHRFGEGDFITLGGVRIPHKHGLVAHSDGDVLLHALSDALLGAAALGDIGKHFPDTDPRFKGADSRALLRHVVAIVAEKGWKVGNVDATIVAQAPKMAPHIETMRGLIAEDLGVAVDQVNVKATTTERLGFTGREEGIAVHAVALLMAR.

Residues Asp-8 and His-10 each coordinate a divalent metal cation. 4-CDP-2-C-methyl-D-erythritol 2-phosphate is bound by residues 8-10 (DVH) and 34-35 (HS). An a divalent metal cation-binding site is contributed by His-42. 4-CDP-2-C-methyl-D-erythritol 2-phosphate contacts are provided by residues 56 to 58 (DIG), 61 to 65 (FPDTD), 100 to 106 (AQAPKMA), 132 to 135 (TTTE), Phe-139, and Arg-142.

Belongs to the IspF family. In terms of assembly, homotrimer. A divalent metal cation serves as cofactor.

It catalyses the reaction 4-CDP-2-C-methyl-D-erythritol 2-phosphate = 2-C-methyl-D-erythritol 2,4-cyclic diphosphate + CMP. It participates in isoprenoid biosynthesis; isopentenyl diphosphate biosynthesis via DXP pathway; isopentenyl diphosphate from 1-deoxy-D-xylulose 5-phosphate: step 4/6. Its function is as follows. Involved in the biosynthesis of isopentenyl diphosphate (IPP) and dimethylallyl diphosphate (DMAPP), two major building blocks of isoprenoid compounds. Catalyzes the conversion of 4-diphosphocytidyl-2-C-methyl-D-erythritol 2-phosphate (CDP-ME2P) to 2-C-methyl-D-erythritol 2,4-cyclodiphosphate (ME-CPP) with a corresponding release of cytidine 5-monophosphate (CMP). The chain is 2-C-methyl-D-erythritol 2,4-cyclodiphosphate synthase from Pseudomonas aeruginosa (strain ATCC 15692 / DSM 22644 / CIP 104116 / JCM 14847 / LMG 12228 / 1C / PRS 101 / PAO1).